We begin with the raw amino-acid sequence, 424 residues long: Splicing factor 3B subunit 4 (424 aa).

Alanine 2 carries the N-acetylalanine modification. RRM domains lie at 13-91 and 100-179; these read ATVY…KASA and ANIF…YAFK. Tyrosine 56 carries the post-translational modification Phosphotyrosine. Residues 207-424 form a disordered region; sequence PHQLFADAPP…RGPLRGPLPQ (218 aa). The span at 222-231 shows a compositional bias: low complexity; sequence NPVVSSLGSG. Pro residues predominate over residues 232 to 268; the sequence is LPPPGMPPPGSFPPPVPPPGALPPGIPPAMPPPPMPP. Composition is skewed to low complexity over residues 269-280 and 303-323; these read GAAGHGPPSAGT and HPGM…GHPH. Composition is skewed to pro residues over residues 332–381 and 388–424; these read QPPP…PLMP and PPRP…PLPQ.

The protein belongs to the SF3B4 family. Component of the 17S U2 SnRNP complex, a ribonucleoprotein complex that contains small nuclear RNA (snRNA) U2 and a number of specific proteins. Part of the SF3B subcomplex of the 17S U2 SnRNP complex. SF3B associates with the splicing subcomplex SF3A and a 12S RNA unit to form the U2 small nuclear ribonucleoproteins complex (U2 snRNP). SF3B4 has been found in complex spliceosome 'B' and 'C' as well. Component of the minor (U12-type spliceosome) spliceosome. Found in a complex with PRMT9, SF3B2 and SF3B4.

Its subcellular location is the nucleus. Component of the 17S U2 SnRNP complex of the spliceosome, a large ribonucleoprotein complex that removes introns from transcribed pre-mRNAs. The 17S U2 SnRNP complex (1) directly participates in early spliceosome assembly and (2) mediates recognition of the intron branch site during pre-mRNA splicing by promoting the selection of the pre-mRNA branch-site adenosine, the nucleophile for the first step of splicing. Within the 17S U2 SnRNP complex, SF3B4 is part of the SF3B subcomplex, which is required for 'A' complex assembly formed by the stable binding of U2 snRNP to the branchpoint sequence in pre-mRNA. Sequence independent binding of SF3A and SF3B subcomplexes upstream of the branch site is essential, it may anchor U2 snRNP to the pre-mRNA. May also be involved in the assembly of the 'E' complex. Also acts as a component of the minor spliceosome, which is involved in the splicing of U12-type introns in pre-mRNAs. This chain is Splicing factor 3B subunit 4 (SF3B4), found in Homo sapiens (Human).